Reading from the N-terminus, the 373-residue chain is Ferroptosis suppressor protein 1 (373 aa).

Gly2 carries the N-myristoyl glycine lipid modification. Residues 13–29 (VVVVGGGFGGTAAASLL) traverse the membrane as a helical segment. Residues 17 to 21 (GGGFG), Arg53, and Val81 contribute to the 6-hydroxy-FAD site. The residue at position 167 (Lys167) is an N6-acetyllysine. Asp284 contacts 6-hydroxy-FAD.

It belongs to the FAD-dependent oxidoreductase family. Requires 6-hydroxy-FAD as cofactor. N-myristoylation at Gly-2 mediates the recruitment to lipid droplets and plasma membrane. Post-translationally, acetylation at Lys-167 prevents AIFM2 ubiquitination and degradation, thereby inhibiting ferroptosis. KAT2B mediates acetylation at Lys-167, while HDAC3 removes it. In terms of processing, ubiquitinated. AIFM2 undergoes 'Lys-29'-ubiquitination and proteasomal degradation, which is inhibited by acetylation at Lys-167.

Its subcellular location is the lipid droplet. The protein localises to the cell membrane. The protein resides in the cytoplasm. It is found in the mitochondrion membrane. It localises to the nucleus. It carries out the reaction ubiquinone-10 + NADH + H(+) = ubiquinol-10 + NAD(+). The enzyme catalyses phylloquinone + NADH + H(+) = phylloquinol + NAD(+). The catalysed reaction is menaquinone-4 + NADH + H(+) = menaquinol-4 + NAD(+). It catalyses the reaction menadione + NADH + H(+) = menadiol + NAD(+). Its activity is regulated as follows. The modification by 4-hydroxy-2-nonenal (HNE) adduction in mitochondria results in loss of the oxidoreductase activity and activation of a novel function in mitochondrial oxidative stress signaling. Functionally, a NAD(P)H-dependent oxidoreductase that acts as a key inhibitor of ferroptosis. At the plasma membrane, catalyzes reduction of coenzyme Q/ubiquinone-10 to ubiquinol-10, a lipophilic radical-trapping antioxidant that prevents lipid oxidative damage and consequently ferroptosis. Acts in parallel to GPX4 to suppress phospholipid peroxidation and ferroptosis. This anti-ferroptotic function is independent of cellular glutathione levels. Also acts as a potent radical-trapping antioxidant by mediating warfarin-resistant vitamin K reduction in the canonical vitamin K cycle: catalyzes NAD(P)H-dependent reduction of vitamin K (phylloquinone, menaquinone-4 and menadione) to hydroquinone forms. Hydroquinones act as potent radical-trapping antioxidants inhibitor of phospholipid peroxidation and ferroptosis. May play a role in mitochondrial stress signaling. Upon oxidative stress, associates with the lipid peroxidation end product 4-hydroxy-2-nonenal (HNE) forming a lipid adduct devoid of oxidoreductase activity, which then translocates from mitochondria into the nucleus triggering DNA damage and cell death. The polypeptide is Ferroptosis suppressor protein 1 (AIFM2) (Taeniopygia guttata (Zebra finch)).